Reading from the N-terminus, the 1902-residue chain is PII-type proteinase (1902 aa).

The signal sequence occupies residues 1 to 33 (MQRKKKGLSILLAGTVALGALAVLPVGEIQAKA). A propeptide spanning residues 34-187 (AISQQTKGSS…VTLAKVYYPT (154 aa)) is cleaved from the precursor. Positions 191 to 697 (ANSMANVQAV…AGLVDVKAAI (507 aa)) constitute a Peptidase S8 domain. Active-site charge relay system residues include Asp217, His281, and Ser620. The segment at 1796-1874 (GKGDGTTGTS…GALPKTGETT (79 aa)) is disordered. Gly residues predominate over residues 1797–1812 (KGDGTTGTSDKGGGQG). The span at 1830-1843 (SQPSSGGNIPTNPA) shows a compositional bias: polar residues. The LPXTG sorting signal motif lies at 1867–1871 (LPKTG). At Thr1870 the chain carries Pentaglycyl murein peptidoglycan amidated threonine. Positions 1871 to 1902 (GETTERPAFGFLGVIVVSLMGVLGLKRKQREE) are cleaved as a propeptide — removed by sortase.

It belongs to the peptidase S8 family.

It is found in the secreted. The protein localises to the cell wall. The catalysed reaction is Endopeptidase activity with very broad specificity, although some subsite preference have been noted, e.g. large hydrophobic residues in the P1 and P4 positions, and Pro in the P2 position. Best known for its action on caseins, although it has been shown to hydrolyze hemoglobin and oxidized insulin B-chain.. Its function is as follows. Protease which breaks down milk proteins during the growth of the bacteria on milk. The chain is PII-type proteinase (prt) from Lactococcus lactis subsp. cremoris (Streptococcus cremoris).